The following is a 367-amino-acid chain: Choline-phosphate cytidylyltransferase A (367 aa).

Met-1 is subject to N-acetylmethionine. The tract at residues 1 to 32 is disordered; it reads MDAQSSAKVNSRKRRKEAPGPNGATEEDGIPS. Lys-8 is modified (N6-acetyllysine). 4 residues coordinate CTP: Ile-84, Phe-85, His-92, and Lys-122. Phosphocholine is bound by residues Lys-122 and Trp-151. CTP contacts are provided by His-168, Asp-169, Tyr-173, Gln-195, Arg-196, Thr-197, and Ile-200. Amphipathic regions lie at residues 228 to 287 and 298 to 315; these read KELN…EFIG and ALKH…QAIS. A Phosphoserine modification is found at Ser-233. Positions 272-293 are autoinhibitory (AI); it reads IDLIQKWEEKSREFIGSFLEMF. The interval 313–367 is disordered; that stretch reads AISPKQSPSSSPTHERSPSPSFRWPFSGKTSPSSSPASLSRCRAVTCDISEDEED. Residues Ser-315, Ser-319, Ser-321, Ser-322, and Ser-323 each carry the phosphoserine modification. A compositionally biased stretch (polar residues) spans 315–324; it reads SPKQSPSSSP. Residues 319 to 324 form repeat 1; it reads SPSSSP. The 3 X repeats stretch occupies residues 319–348; sequence SPSSSPTHERSPSPSFRWPFSGKTSPSSSP. A Phosphothreonine modification is found at Thr-325. Phosphoserine occurs at positions 329, 331, and 333. The stretch at 329 to 333 is one 2; approximate repeat; sequence SPSPS. Over residues 330–352 the composition is skewed to low complexity; the sequence is PSPSFRWPFSGKTSPSSSPASLS. At Thr-342 the chain carries Phosphothreonine. Residues Ser-343, Ser-345, Ser-346, Ser-347, Ser-350, and Ser-352 each carry the phosphoserine modification. Copy 3 of the repeat occupies 343–348; it reads SPSSSP. Thr-358 is modified (phosphothreonine). Phosphoserine is present on Ser-362.

This sequence belongs to the cytidylyltransferase family. In terms of assembly, homodimer. Post-translationally, the serine residues of the C-terminus are phosphorylated. The inactive soluble form is stabilized by phosphorylation, the active membrane bound form is promoted by anionic lipids or diacylglycerol, and is stabilized by dephosphorylation. In terms of processing, monoubiquitinated by the SCF(FBXL2) complex, leading to proteasomal degradation. In terms of tissue distribution, brain and liver (at protein level). Also found in heart, kidney, spleen, lung, skeletal muscle, ovary and testis.

The protein localises to the cytoplasm. It localises to the cytosol. Its subcellular location is the membrane. The protein resides in the endoplasmic reticulum membrane. It is found in the nucleus. The catalysed reaction is phosphocholine + CTP + H(+) = CDP-choline + diphosphate. It participates in phospholipid metabolism; phosphatidylcholine biosynthesis; phosphatidylcholine from phosphocholine: step 1/2. Interconverts between an inactive cytosolic form and an active membrane-bound form. Activation involves disruption of an inhibitory interaction between helices at the base of the active site and the autoinhibitory (AI) region. Catalyzes the key rate-limiting step in the CDP-choline pathway for phosphatidylcholine biosynthesis. This chain is Choline-phosphate cytidylyltransferase A (Pcyt1a), found in Mus musculus (Mouse).